The primary structure comprises 122 residues: Large ribosomal subunit protein uL14 (122 aa).

It belongs to the universal ribosomal protein uL14 family. As to quaternary structure, part of the 50S ribosomal subunit. Forms a cluster with proteins L3 and L19. In the 70S ribosome, L14 and L19 interact and together make contacts with the 16S rRNA in bridges B5 and B8.

Functionally, binds to 23S rRNA. Forms part of two intersubunit bridges in the 70S ribosome. The chain is Large ribosomal subunit protein uL14 from Streptococcus pneumoniae (strain JJA).